Here is a 683-residue protein sequence, read N- to C-terminus: Dynein, 78 kDa intermediate chain, flagellar outer arm (683 aa).

Positions 1-42 (MPALSPAKKGTDKGKTGKKTGKQEQNAQDYIPPPPPMPGDEA) are disordered. WD repeat units follow at residues 358–398 (HTES…DEPI), 407–450 (KLND…LIPE), 562–602 (DLND…LLPL), and 608–647 (VKKA…RITS).

This sequence belongs to the dynein intermediate chain family. Consists of at least 3 heavy chains (alpha, beta and gamma), 2 intermediate chains and 8 light chains.

It localises to the cytoplasm. The protein resides in the cytoskeleton. The protein localises to the flagellum axoneme. Functionally, is essential for arm assembly or attachment to the outer doublet microtubule. The polypeptide is Dynein, 78 kDa intermediate chain, flagellar outer arm (ODA9) (Chlamydomonas reinhardtii (Chlamydomonas smithii)).